The chain runs to 350 residues: Mitogen-activated protein kinase HOG1 (350 aa).

A Protein kinase domain is found at 20 to 299 (YTDLQPVGMG…AAQALAHEYL (280 aa)). Residues 26-34 (VGMGAFGLV) and lysine 49 contribute to the ATP site. Residue aspartate 141 is the Proton acceptor of the active site. The TXY motif lies at 171 to 173 (TGY).

Belongs to the protein kinase superfamily. Ser/Thr protein kinase family. MAP kinase subfamily. HOG1 sub-subfamily. Requires Mg(2+) as cofactor.

The protein localises to the cytoplasm. It localises to the nucleus. The catalysed reaction is L-seryl-[protein] + ATP = O-phospho-L-seryl-[protein] + ADP + H(+). The enzyme catalyses L-threonyl-[protein] + ATP = O-phospho-L-threonyl-[protein] + ADP + H(+). Its function is as follows. Proline-directed serine/threonine-protein kinase involved in a signal transduction pathway that is activated by changes in the osmolarity of the extracellular environment. Controls osmotic regulation of transcription of target genes. Involved in environmental stress response. Via the downstream MSN2 transcription factor, may play roles in the regulation of growth, conidiation, trap development, fatty acid metabolism and secondary metabolites biosynthesis. This is Mitogen-activated protein kinase HOG1 from Arthrobotrys oligospora (strain ATCC 24927 / CBS 115.81 / DSM 1491) (Nematode-trapping fungus).